We begin with the raw amino-acid sequence, 362 residues long: MELGSCLEGGREAAEEEGEPEVKKRRLLCVEFASVASCDAAVAQCFLAENDWEMERALNSYFEPPVEESALERRPETISEPKTYVDLTNEETTDSTTSKISPSEDTQQENGSMFSLITWNIDGLDLNNLSERARGVCSYLALYSPDVIFLQEVIPPYYSYLKKRSSNYEIITGHEEGYFTAIMLKKSRVKLKSQEIIPFPSTKMMRNLLCVHVNVSGNELCLMTSHLESTRGHAAERMNQLKMVLKKMQEAPESATVIFAGDTNLRDREVTRCGGLPNNIVDVWEFLGKPKHCQYTWDTQMNSNLGITAACKLRFDRIFFRAAAEEGHIIPRSLDLLGLEKLDCGRFPSDHWGLLCNLDIIL.

Residue methionine 1 is modified to N-acetylmethionine. The disordered stretch occupies residues 1-20 (MELGSCLEGGREAAEEEGEP). Glycyl lysine isopeptide (Lys-Gly) (interchain with G-Cter in SUMO2) cross-links involve residues lysine 23 and lysine 82. Residues 87–109 (LTNEETTDSTTSKISPSEDTQQE) are disordered. Phosphothreonine; by ACVR1B is present on residues threonine 88 and threonine 92. Polar residues predominate over residues 94–109 (DSTTSKISPSEDTQQE). Serine 95 is subject to Phosphoserine. An interaction with 5' end of substrate DNA region spans residues 120 to 124 (NIDGL). Positions 122 and 152 each coordinate Mg(2+). Residues 226–231 (HLESTR) are interaction with 5' end of substrate DNA. The active-site Proton donor/acceptor is the aspartate 262. The interval 264-266 (NLR) is interaction with 5' end of substrate DNA.

It belongs to the CCR4/nocturin family. Interacts with TRAF2, TRAF3, TRAF5, TRAF6, TNFRSF8/CD30, TNFRSF5/CD40, TNFRSF1B/TNF-R75, ETS1, ETS2, FLI1, SMAD3 and ACVR1B/ALK4. As to quaternary structure, (Microbial infection) Interacts with Hantaan hantavirus nucleoprotein. In terms of assembly, (Microbial infection) Interacts with Seoul hantavirus nucleoprotein. Mg(2+) serves as cofactor. The cofactor is Mn(2+). Ubiquitinated by TRAF6. In terms of tissue distribution, widely expressed. Highly expressed in various brain regions, including the frontal and occipital lobes, the hippocampus, the striatum and the cerebellum.

The protein localises to the nucleus. Its subcellular location is the PML body. It is found in the nucleolus. The protein resides in the cytoplasm. Its function is as follows. DNA repair enzyme that can remove a variety of covalent adducts from DNA through hydrolysis of a 5'-phosphodiester bond, giving rise to DNA with a free 5' phosphate. Catalyzes the hydrolysis of dead-end complexes between DNA and the topoisomerase 2 (TOP2) active site tyrosine residue. The 5'-tyrosyl DNA phosphodiesterase activity can enable the repair of TOP2-induced DNA double-strand breaks/DSBs without the need for nuclease activity, creating a 'clean' DSB with 5'-phosphate termini that are ready for ligation. Thereby, protects the transcription of many genes involved in neurological development and maintenance from the abortive activity of TOP2. Hydrolyzes 5'-phosphoglycolates on protruding 5' ends on DSBs due to DNA damage by radiation and free radicals. Has preference for single-stranded DNA or duplex DNA with a 4 base pair overhang as substrate. Acts as a regulator of ribosome biogenesis following stress. Also has 3'-tyrosyl DNA phosphodiesterase activity, but less efficiently and much slower than TDP1. Constitutes the major if not only 5'-tyrosyl-DNA phosphodiesterase in cells. Also acts as an adapter by participating in the specific activation of MAP3K7/TAK1 in response to TGF-beta: associates with components of the TGF-beta receptor-TRAF6-TAK1 signaling module and promotes their ubiquitination dependent complex formation. Involved in non-canonical TGF-beta induced signaling routes. May also act as a negative regulator of ETS1 and may inhibit NF-kappa-B activation. (Microbial infection) Used by picornaviruses to remove the small polypeptide, VPg (virus Protein genome-linked, the primer for viral RNA synthesis), from the genomic RNA of the virus. Acts as a 5'-tyrosyl RNA phosphodiesterase and cleaves the covalent VPg-Tyr-RNA bond. This cleavage would play a role in viral replication and occur in viral replication vesicles, but would not act on viral mRNA. This is Tyrosyl-DNA phosphodiesterase 2 from Homo sapiens (Human).